Consider the following 2837-residue polypeptide: Probable polyketide synthase 3 (2837 aa).

The Ketosynthase family 3 (KS3) domain maps to 39-464 (NNGIGIIGIG…GSNVCIILKD (426 aa)). Residues Cys209, His348, and His388 each act as for beta-ketoacyl synthase activity in the active site. The segment at 664 to 697 (GIKPTFIVGHSLGEVTAAYCSGMIDLETECYLIY) is acyl/malonyl transferase. Ser674 functions as the For acyl/malonyl transferase activity in the catalytic mechanism. The tract at residues 962–1084 (IDILGNSITD…GNFQLFKHNG (123 aa)) is N-terminal hotdog fold. One can recognise a PKS/mFAS DH domain in the interval 962 to 1255 (IDILGNSITD…CTSLTPIQDS (294 aa)). His995 functions as the Proton acceptor; for dehydratase activity in the catalytic mechanism. Residues 1106–1255 (NLTKLTKEDL…CTSLTPIQDS (150 aa)) are C-terminal hotdog fold. The active-site Proton donor; for dehydratase activity is Asp1169. The region spanning 2330-2407 (DNKNSVNQMF…SSIKIITNSL (78 aa)) is the Carrier domain. An O-(pantetheine 4'-phosphoryl)serine modification is found at Ser2367. A helical transmembrane segment spans residues 2464 to 2484 (KVILLSGSTGFLGGYLLLNLV).

The cofactor is pantetheine 4'-phosphate.

It localises to the membrane. Functionally, probable polyketide synthase. This chain is Probable polyketide synthase 3 (pks3), found in Dictyostelium discoideum (Social amoeba).